The chain runs to 255 residues: Probable transcriptional regulatory protein Rcas_0718 (255 aa).

The protein belongs to the TACO1 family.

It is found in the cytoplasm. This is Probable transcriptional regulatory protein Rcas_0718 from Roseiflexus castenholzii (strain DSM 13941 / HLO8).